The following is a 54-amino-acid chain: MARNDIRPIIKLKSTAGTGYTYVTRKNKRNNPDRISLKKYDPVVRKHVEFREER.

It belongs to the bacterial ribosomal protein bL33 family.

This is Large ribosomal subunit protein bL33 from Corynebacterium diphtheriae (strain ATCC 700971 / NCTC 13129 / Biotype gravis).